Here is a 138-residue protein sequence, read N- to C-terminus: Large ribosomal subunit protein uL16 (138 aa).

Positions 1–16 (MLIPRRVKHRKQHHPG) are enriched in basic residues. The tract at residues 1 to 24 (MLIPRRVKHRKQHHPGRSGAATGG) is disordered.

Belongs to the universal ribosomal protein uL16 family. Part of the 50S ribosomal subunit.

Its function is as follows. Binds 23S rRNA and is also seen to make contacts with the A and possibly P site tRNAs. This is Large ribosomal subunit protein uL16 from Arthrobacter sp. (strain FB24).